Consider the following 1115-residue polypeptide: Gamma tubulin complex adapter mto1 (1115 aa).

The tract at residues 25 to 180 (LTDEEVRRIL…NYISSSLDQL (156 aa)) is disordered. Basic and acidic residues-rich tracts occupy residues 28 to 41 (EEVRRILSPRKEGS) and 56 to 71 (EASHKYDFEIDRDSLK). 3 stretches are compositionally biased toward polar residues: residues 72–102 (SDSGSPRLHQNATAPTSSTPLQSPDESVNKL), 119–130 (DTTNFDRLNDNI), and 139–151 (PVLTANQGFQSQE). S94 carries the phosphoserine modification. The span at 165–176 (SDPSSPNYISSS) shows a compositional bias: low complexity. Residues 445–915 (NEALLLRKQE…ERNSLIKNIV (471 aa)) adopt a coiled-coil conformation. The segment at 523-537 (LMRMEQQWREDVDQL) is required for interaction with mto2. Residues 1001–1011 (GSTSSIPNSPR) show a composition bias toward polar residues. Disordered regions lie at residues 1001–1037 (GSTSSIPNSPRASKRVSLDSEDKKLVPASPDKSAVQR) and 1067–1115 (EQEG…QEHK). Phosphoserine occurs at positions 1005 and 1009. Basic and acidic residues-rich tracts occupy residues 1016 to 1025 (VSLDSEDKKL) and 1067 to 1084 (EQEGRKRDKLGARERLQD). Residues 1072–1102 (KRDKLGARERLQDLIRQNRSLSRQIKTDKES) are a coiled coil. Composition is skewed to polar residues over residues 1086–1095 (IRQNRSLSRQ) and 1104–1115 (SRSPSISSQEHK).

As to quaternary structure, interacts with mto2; the interaction is direct and required for efficient binding to the gamma-tubulin complex. Interacts with gamma tubulin complex subunits alp4, alp6 and gtb1. Interacts with mcp6.

It is found in the cytoplasm. Its subcellular location is the cytoskeleton. The protein localises to the microtubule organizing center. It localises to the spindle pole body. Its function is as follows. Spindle pole body (SPB) component that acts as the gamma-tubulin complex-binding protein of the SPB outer plaque. Promotes nucleation of all cytoplasmic microtubules by recruiting the gamma-tubulin complex to the spindle pole body (SPB), to the interphase microtubule organizing center (iMTOC), and to the equatorial MTOC (eMTOC) during anaphase. The chain is Gamma tubulin complex adapter mto1 from Schizosaccharomyces pombe (strain 972 / ATCC 24843) (Fission yeast).